We begin with the raw amino-acid sequence, 470 residues long: uncharacterized protein (470 aa).

Positions 1–69 (MTRYQHLATL…PRSGYFVAQR (69 aa)) constitute an HTH gntR-type domain. K313 is subject to N6-(pyridoxal phosphate)lysine.

In the C-terminal section; belongs to the class-I pyridoxal-phosphate-dependent aminotransferase family.

This is an uncharacterized protein from Escherichia coli (strain K12).